The chain runs to 197 residues: Probable nicotinate-nucleotide adenylyltransferase (197 aa).

Belongs to the NadD family.

The catalysed reaction is nicotinate beta-D-ribonucleotide + ATP + H(+) = deamido-NAD(+) + diphosphate. The protein operates within cofactor biosynthesis; NAD(+) biosynthesis; deamido-NAD(+) from nicotinate D-ribonucleotide: step 1/1. Its function is as follows. Catalyzes the reversible adenylation of nicotinate mononucleotide (NaMN) to nicotinic acid adenine dinucleotide (NaAD). This is Probable nicotinate-nucleotide adenylyltransferase from Bordetella pertussis (strain Tohama I / ATCC BAA-589 / NCTC 13251).